Reading from the N-terminus, the 215-residue chain is Ion-translocating oxidoreductase complex subunit G (215 aa).

A helical membrane pass occupies residues 9–29; that stretch reads GLLLSGFALICTAAVALVNEA. Threonine 176 is modified (FMN phosphoryl threonine).

The protein belongs to the RnfG family. The complex is composed of six subunits: RnfA, RnfB, RnfC, RnfD, RnfE and RnfG. FMN serves as cofactor.

The protein localises to the cell inner membrane. Part of a membrane-bound complex that couples electron transfer with translocation of ions across the membrane. This is Ion-translocating oxidoreductase complex subunit G from Shewanella amazonensis (strain ATCC BAA-1098 / SB2B).